Reading from the N-terminus, the 324-residue chain is Glyoxylate/hydroxypyruvate reductase B (324 aa).

Catalysis depends on residues Arg-237 and Glu-266. The active-site Proton donor is His-285.

This sequence belongs to the D-isomer specific 2-hydroxyacid dehydrogenase family. GhrB subfamily. As to quaternary structure, homodimer.

It localises to the cytoplasm. It carries out the reaction glycolate + NADP(+) = glyoxylate + NADPH + H(+). The catalysed reaction is (R)-glycerate + NAD(+) = 3-hydroxypyruvate + NADH + H(+). The enzyme catalyses (R)-glycerate + NADP(+) = 3-hydroxypyruvate + NADPH + H(+). Catalyzes the NADPH-dependent reduction of glyoxylate and hydroxypyruvate into glycolate and glycerate, respectively. The protein is Glyoxylate/hydroxypyruvate reductase B of Salmonella paratyphi A (strain ATCC 9150 / SARB42).